Consider the following 658-residue polypeptide: Cysteine-rich receptor-like protein kinase 14 (658 aa).

The N-terminal stretch at 1–22 is a signal peptide; the sequence is MELKNLFPIFWFVLVGFAVVSA. Gnk2-homologous domains lie at 23-125 and 131-240; these read QECG…NSSF and AEPH…LFPF. Residues 23 to 277 lie on the Extracellular side of the membrane; that stretch reads QECGKTGFFV…ATKKGSITIS (255 aa). 5 N-linked (GlcNAc...) asparagine glycosylation sites follow: asparagine 51, asparagine 60, asparagine 102, asparagine 122, and asparagine 146. Residues 278 to 298 form a helical membrane-spanning segment; that stretch reads IGIVWAIIIPTVIVVFLVLLA. Residues 299-658 lie on the Cytoplasmic side of the membrane; the sequence is LGFVVYRRRK…DVTITDFEPR (360 aa). Residues 337-614 form the Protein kinase domain; sequence FSESNIIGRG…NMMLINNSYV (278 aa). ATP contacts are provided by residues 343-351 and lysine 364; that span reads IGRGGFGEV. A Phosphotyrosine modification is found at tyrosine 409. Aspartate 461 functions as the Proton acceptor in the catalytic mechanism. Serine 465 carries the post-translational modification Phosphoserine. At threonine 501 the chain carries Phosphothreonine. Tyrosine 509 bears the Phosphotyrosine mark.

Belongs to the protein kinase superfamily. Ser/Thr protein kinase family. CRK subfamily.

It is found in the membrane. The enzyme catalyses L-seryl-[protein] + ATP = O-phospho-L-seryl-[protein] + ADP + H(+). The catalysed reaction is L-threonyl-[protein] + ATP = O-phospho-L-threonyl-[protein] + ADP + H(+). The chain is Cysteine-rich receptor-like protein kinase 14 (CRK14) from Arabidopsis thaliana (Mouse-ear cress).